Reading from the N-terminus, the 471-residue chain is Ribulose bisphosphate carboxylase large chain (471 aa).

Substrate is bound by residues N119 and T169. The Proton acceptor role is filled by K171. K173 is a substrate binding site. Mg(2+) contacts are provided by K197, D199, and E200. N6-carboxylysine is present on K197. The active-site Proton acceptor is H290. Positions 291, 323, and 375 each coordinate substrate.

It belongs to the RuBisCO large chain family. Type I subfamily. Heterohexadecamer of 8 large chains and 8 small chains; disulfide-linked. The disulfide link is formed within the large subunit homodimers. The cofactor is Mg(2+). The disulfide bond which can form in the large chain dimeric partners within the hexadecamer appears to be associated with oxidative stress and protein turnover.

It is found in the carboxysome. It carries out the reaction 2 (2R)-3-phosphoglycerate + 2 H(+) = D-ribulose 1,5-bisphosphate + CO2 + H2O. It catalyses the reaction D-ribulose 1,5-bisphosphate + O2 = 2-phosphoglycolate + (2R)-3-phosphoglycerate + 2 H(+). RuBisCO catalyzes two reactions: the carboxylation of D-ribulose 1,5-bisphosphate, the primary event in carbon dioxide fixation, as well as the oxidative fragmentation of the pentose substrate in the photorespiration process. Both reactions occur simultaneously and in competition at the same active site. This is Ribulose bisphosphate carboxylase large chain from Microcystis aeruginosa (strain NIES-843 / IAM M-2473).